We begin with the raw amino-acid sequence, 529 residues long: Corneodesmosin (529 aa).

The N-terminal stretch at 1 to 32 is a signal peptide; that stretch reads MGSSRAPWMGRVGGHGMMALLLAGLLLPGTLA. Disordered regions lie at residues 38–248 and 383–492; these read FSDP…SVSG and GSTG…SSAG. Composition is skewed to low complexity over residues 58 to 83, 90 to 100, 111 to 175, 189 to 231, 392 to 408, and 426 to 441; these read GKGD…SARS, GSSSGSSIAQG, GYSQ…NGSA, PSQP…SGGP, SPSS…SSSS, and PGTG…QSSG. A glycan (N-linked (GlcNAc...) asparagine) is linked at asparagine 172. Over residues 449 to 467 the composition is skewed to polar residues; sequence GSKSSSSGHPCMSVSSLTL.

It localises to the secreted. In terms of biological role, important for the epidermal barrier integrity. The protein is Corneodesmosin (CDSN) of Pan troglodytes (Chimpanzee).